The primary structure comprises 97 residues: Aspartyl/glutamyl-tRNA(Asn/Gln) amidotransferase subunit C (97 aa).

This sequence belongs to the GatC family. As to quaternary structure, heterotrimer of A, B and C subunits.

It catalyses the reaction L-glutamyl-tRNA(Gln) + L-glutamine + ATP + H2O = L-glutaminyl-tRNA(Gln) + L-glutamate + ADP + phosphate + H(+). The catalysed reaction is L-aspartyl-tRNA(Asn) + L-glutamine + ATP + H2O = L-asparaginyl-tRNA(Asn) + L-glutamate + ADP + phosphate + 2 H(+). Allows the formation of correctly charged Asn-tRNA(Asn) or Gln-tRNA(Gln) through the transamidation of misacylated Asp-tRNA(Asn) or Glu-tRNA(Gln) in organisms which lack either or both of asparaginyl-tRNA or glutaminyl-tRNA synthetases. The reaction takes place in the presence of glutamine and ATP through an activated phospho-Asp-tRNA(Asn) or phospho-Glu-tRNA(Gln). This chain is Aspartyl/glutamyl-tRNA(Asn/Gln) amidotransferase subunit C, found in Prochlorococcus marinus (strain MIT 9215).